Here is a 259-residue protein sequence, read N- to C-terminus: uncharacterized protein (259 aa).

It belongs to the methyltransferase superfamily.

This is an uncharacterized protein from Mycobacteroides abscessus (strain ATCC 19977 / DSM 44196 / CCUG 20993 / CIP 104536 / JCM 13569 / NCTC 13031 / TMC 1543 / L948) (Mycobacterium abscessus).